A 265-amino-acid chain; its full sequence is tRNA (guanine-N(7)-)-methyltransferase (265 aa).

A disordered region spans residues 1 to 40 (MIHDDDPNAPGAPHDDDATAAPASATRAAPAAGDDDDANP). A compositionally biased stretch (low complexity) spans 19–32 (TAAPASATRAAPAA). S-adenosyl-L-methionine contacts are provided by Glu95, Glu120, Asp147, and Asp170. Asp170 is a catalytic residue. Substrate is bound by residues Lys174, Asp206, and 241-244 (TKFE).

This sequence belongs to the class I-like SAM-binding methyltransferase superfamily. TrmB family.

It catalyses the reaction guanosine(46) in tRNA + S-adenosyl-L-methionine = N(7)-methylguanosine(46) in tRNA + S-adenosyl-L-homocysteine. The protein operates within tRNA modification; N(7)-methylguanine-tRNA biosynthesis. Functionally, catalyzes the formation of N(7)-methylguanine at position 46 (m7G46) in tRNA. The chain is tRNA (guanine-N(7)-)-methyltransferase from Burkholderia pseudomallei (strain 1710b).